Here is a 312-residue protein sequence, read N- to C-terminus: Olfactory receptor 2B8 (312 aa).

Residues 1–25 (MDQKNGSSFTGFILLGFSDRPQLEL) are Extracellular-facing. Residue Asn-5 is glycosylated (N-linked (GlcNAc...) asparagine). Residues 26 to 49 (VLFVVLLIFYIFTLLGNKTIIVLS) traverse the membrane as a helical segment. Over 50 to 57 (HLDPHLHT) the chain is Cytoplasmic. A helical transmembrane segment spans residues 58 to 79 (PMYFFFSNLSFLDLCYTTGIVP). The Extracellular portion of the chain corresponds to 80–100 (QLLVNLRGADKSISYGGCVVQ). Cys-97 and Cys-189 form a disulfide bridge. The chain crosses the membrane as a helical span at residues 101–120 (LYISLGLGSTECVLLGVMVF). Residues 121 to 139 (DRYAAVCRPLHYTVVMHPC) lie on the Cytoplasmic side of the membrane. The helical transmembrane segment at 140–158 (LYVLMASTSWVIGFANSLL) threads the bilayer. The Extracellular segment spans residues 159–195 (QTVLILLLTLCGRNKLEHFLCEVPPLLKLACVDTTMN). Asn-195 is a glycosylation site (N-linked (GlcNAc...) asparagine). Residues 196–219 (ESELFFVSVIILLVPVALIIFSYS) traverse the membrane as a helical segment. Residues 220–236 (QIVRAVMRIKLATGQRK) are Cytoplasmic-facing. Residues 237–259 (VFGTCGSHLTVVSLFYGTAIYAY) traverse the membrane as a helical segment. Residues 260–272 (LQPGNNYSQDQGK) lie on the Extracellular side of the membrane. Asn-265 carries N-linked (GlcNAc...) asparagine glycosylation. The chain crosses the membrane as a helical span at residues 273 to 292 (FISLFYTIITPMINPLIYTL). Residues 293 to 312 (RNKDVKGALKKVLWKNYDSR) lie on the Cytoplasmic side of the membrane.

Belongs to the G-protein coupled receptor 1 family.

It localises to the cell membrane. Odorant receptor. The protein is Olfactory receptor 2B8 of Homo sapiens (Human).